The sequence spans 1985 residues: Voltage-dependent L-type calcium channel subunit alpha-1F (1985 aa).

Over residues 1 to 11 (MSESEVGKDTT) the composition is skewed to basic and acidic residues. The interval 1–56 (MSESEVGKDTTPEPSPANGTGPGPEWGLCPGPPTVGTDTSGASGLGTPRRRTQHNK) is disordered. Residues 1 to 92 (MSESEVGKDT…RSCISIVEWK (92 aa)) lie on the Cytoplasmic side of the membrane. The stretch at 79–375 (NPIRRSCISI…LVLGVLSGEF (297 aa)) is one I repeat. Residues 93–111 (PFDILILLTIFANCVALGV) traverse the membrane as a helical segment. The Extracellular portion of the chain corresponds to 112–129 (YIPFPEDDSNTANHNLEQ). A helical transmembrane segment spans residues 130 to 149 (VEYVFLVIFTVETVLKIVAY). Residues 150–161 (GLVLHPSAYIRN) lie on the Cytoplasmic side of the membrane. Residues 162–180 (GWNLLDFIIVVVGLFSVLL) form a helical membrane-spanning segment. Over 181–201 (EQGPGRPGDAPHTGGKPGGFD) the chain is Extracellular. A helical membrane pass occupies residues 202–220 (VKALRAFRVLRPLRLVSGV). Topologically, residues 221–239 (PSLHIVVNSIMKALVPLLH) are cytoplasmic. The helical transmembrane segment at 240–259 (IALLVLFVIIIYAIIGLELF) threads the bilayer. The Extracellular portion of the chain corresponds to 260-347 (LGRMHKTCYF…WMQDAMGYEL (88 aa)). N-linked (GlcNAc...) asparagine glycosylation is present at N295. E330 contacts Ca(2+). Residues 348 to 372 (PWVYFVSLVIFGSFFVLNLVLGVLS) traverse the membrane as a helical segment. The Cytoplasmic segment spans residues 373–529 (GEFSKEREKA…ARCRRAVKSN (157 aa)). Residues 395 to 412 (QQMEEDLRGYLDWITQAE) are binding to the beta subunit. Positions 455 to 469 (SHSTRSTHSTSSHAS) are enriched in low complexity. The tract at residues 455-490 (SHSTRSTHSTSSHASLPASDTGSMTDTPGDEDEEEG) is disordered. Residues 515–761 (NRGLRARCRR…VFLAIAVDNL (247 aa)) form an II repeat. Residues 530 to 549 (ACYWAVLLLVFLNTLTIASE) form a helical membrane-spanning segment. The Extracellular portion of the chain corresponds to 550–564 (HHGQPLWLTQTQEYA). Residues 565–583 (NKVLLCLFTVEMLLKLYGL) form a helical membrane-spanning segment. Residues 584–591 (GPSVYVAS) are Cytoplasmic-facing. Residues 592–610 (FFNRFDCFVVCGGILETTL) form a helical membrane-spanning segment. Over 611 to 620 (VEVGAMQPLG) the chain is Extracellular. A helical transmembrane segment spans residues 621-639 (ISVLRCVRLLRIFKVTRHW). The Cytoplasmic portion of the chain corresponds to 640–658 (ASLSNLVASLLNSMKSIAS). Residues 659 to 679 (LLLLLFLFIIIFSLLGMQLFG) form a helical membrane-spanning segment. Over 680–733 (GKFNFDQTHTKRSTFDTFPQALLTVFQILTGEDWNVVMYDGIMAYGGPFFPGML) the chain is Extracellular. Residue E711 participates in Ca(2+) binding. The helical transmembrane segment at 734-758 (VCVYFIILFICGNYILLNVFLAIAV) threads the bilayer. Residues 759–876 (DNLASGDAGT…KACHTLIHHH (118 aa)) are Cytoplasmic-facing. The interval 766-834 (AGTAKDKGRE…EEEEENGAGH (69 aa)) is disordered. The segment covering 768–787 (TAKDKGREKSSEGNPPKENK) has biased composition (basic and acidic residues). The segment covering 810–830 (MEEEEEEEEEEEEEEEEEEEN) has biased composition (acidic residues). The stretch at 858–1140 (CLSQTNPLRK…FFMMNIFVGF (283 aa)) is one III repeat. Residues 877–895 (IFTSLILVFIILSSVSLAA) form a helical membrane-spanning segment. Residues 896-911 (EDPIRAHSFRNHILGY) are Extracellular-facing. The helical transmembrane segment at 912-931 (FDYAFTSIFTVEILLKMTVF) threads the bilayer. The Cytoplasmic segment spans residues 932 to 943 (GAFLHRGSFCRS). Residues 944–962 (WFNLLDLLVVSVSLISFGI) traverse the membrane as a helical segment. Topologically, residues 963–968 (HSSAIS) are extracellular. Residues 969-988 (VVKILRVLRVLRPLRAINRA) traverse the membrane as a helical segment. Residues 989–1007 (KGLKHVVQCVFVAIRTIGN) lie on the Cytoplasmic side of the membrane. The helical transmembrane segment at 1008–1027 (IMIVTTLLQFMFACIGVQLF) threads the bilayer. Over 1028–1117 (KGKFYSCTDE…EGPIYNYHVE (90 aa)) the chain is Extracellular. Residues 1065 to 1155 (RLWVNSDFNF…RAQGEQEYQN (91 aa)) form a dihydropyridine binding region. E1091 is a binding site for Ca(2+). A helical membrane pass occupies residues 1118-1138 (ISVFFIVYIIIIAFFMMNIFV). Topologically, residues 1139 to 1195 (GFVIITFRAQGEQEYQNCELDKNQRQCVEYALKAQPLRRYIPKNPHQYRVWATVNSR) are cytoplasmic. An IV repeat occupies 1182-1449 (NPHQYRVWAT…LFVAVIMDNF (268 aa)). The chain crosses the membrane as a helical span at residues 1196–1214 (AFEYLMFLLILLNTVALAM). Topologically, residues 1215–1229 (QHYEQTAPFNYAMDI) are extracellular. A helical membrane pass occupies residues 1230-1249 (LNMVFTGLFTIEMVLKIIAF). Residues 1250 to 1256 (KPKHYFA) are Cytoplasmic-facing. The chain crosses the membrane as a helical span at residues 1257–1278 (DAWNTFDALIVVGSVVDIAVTE). Residues 1279–1295 (VNNGGHLGESSEDTSRI) lie on the Extracellular side of the membrane. Residues 1296-1315 (SITFFRLFRVMRLVKLLSKG) traverse the membrane as a helical segment. Topologically, residues 1316 to 1334 (EGIRTLLWTFIKSFQALPY) are cytoplasmic. The helical transmembrane segment at 1335-1354 (VALLIAMIFFIYAVIGMQMF) threads the bilayer. Residues 1355–1421 (GLVALQDGTQ…GEEFTCGSSF (67 aa)) lie on the Extracellular side of the membrane. Residues 1402 to 1468 (RCDPESDFGP…LGPHHLDEFK (67 aa)) form a dihydropyridine binding region. The interval 1414 to 1457 (EFTCGSSFAIVYFISFFMLCAFLIINLFVAVIMDNFDYLTRDWS) is phenylalkylamine binding. Residues 1422-1446 (AIVYFISFFMLCAFLIINLFVAVIM) form a helical membrane-spanning segment. Residues 1447–1982 (DNFDYLTRDW…EDLGDEMACV (536 aa)) lie on the Cytoplasmic side of the membrane. Disordered regions lie at residues 1643–1729 (VTEE…PHRR) and 1746–1778 (LKGT…SFEP). Residues 1644 to 1665 (TEEEEEEEEAVGQEAEEEEAEN) show a composition bias toward acidic residues. Composition is skewed to polar residues over residues 1675 to 1687 (DSQP…SRIS) and 1713 to 1724 (NSRQPSVIQAGS). Over residues 1767–1776 (DLDRAGRDSF) the composition is skewed to basic and acidic residues.

It belongs to the calcium channel alpha-1 subunit (TC 1.A.1.11) family. CACNA1F subfamily. Voltage-dependent calcium channels are multisubunit complexes, consisting of alpha-1, alpha-2, beta and delta subunits in a 1:1:1:1 ratio. The channel activity is directed by the pore-forming and voltage-sensitive alpha-1 subunit. In many cases, this subunit is sufficient to generate voltage-sensitive calcium channel activity. The auxiliary subunits beta and alpha-2/delta linked by a disulfide bridge regulate the channel activity. Interacts (via IQ domain) with CABP4; in a calcium independent manner. Expressed in the inner and outer nuclear layers and the genglion cell layer of the retina.

The protein resides in the membrane. It carries out the reaction Ca(2+)(in) = Ca(2+)(out). Voltage-sensitive calcium channels (VSCC) mediate the entry of calcium ions into excitable cells and are also involved in a variety of calcium-dependent processes, including muscle contraction, hormone or neurotransmitter release, gene expression, cell motility, cell division and cell death. The isoform alpha-1F gives rise to L-type calcium currents. Long-lasting (L-type) calcium channels belong to the 'high-voltage activated' (HVA) group. They are blocked by dihydropyridines (DHP), phenylalkylamines, and by benzothiazepines. Activates at more negative voltages and does not undergo calcium-dependent inactivation (CDI), due to incoming calcium ions, during depolarization. The polypeptide is Voltage-dependent L-type calcium channel subunit alpha-1F (Mus musculus (Mouse)).